A 259-amino-acid chain; its full sequence is Phosphate import ATP-binding protein PstB (259 aa).

One can recognise an ABC transporter domain in the interval 11 to 254 (AESKNLNFYY…PDNPRTEDYI (244 aa)). 43–50 (GPSGCGKS) serves as a coordination point for ATP.

It belongs to the ABC transporter superfamily. Phosphate importer (TC 3.A.1.7) family. In terms of assembly, the complex is composed of two ATP-binding proteins (PstB), two transmembrane proteins (PstC and PstA) and a solute-binding protein (PstS).

Its subcellular location is the cell inner membrane. The enzyme catalyses phosphate(out) + ATP + H2O = ADP + 2 phosphate(in) + H(+). Its function is as follows. Part of the ABC transporter complex PstSACB involved in phosphate import. Responsible for energy coupling to the transport system. This chain is Phosphate import ATP-binding protein PstB, found in Geobacter sulfurreducens (strain ATCC 51573 / DSM 12127 / PCA).